We begin with the raw amino-acid sequence, 98 residues long: Large ribosomal subunit protein uL23 (98 aa).

It belongs to the universal ribosomal protein uL23 family. As to quaternary structure, part of the 50S ribosomal subunit. Contacts protein L29, and trigger factor when it is bound to the ribosome.

In terms of biological role, one of the early assembly proteins it binds 23S rRNA. One of the proteins that surrounds the polypeptide exit tunnel on the outside of the ribosome. Forms the main docking site for trigger factor binding to the ribosome. The chain is Large ribosomal subunit protein uL23 from Rickettsia canadensis (strain McKiel).